Here is a 398-residue protein sequence, read N- to C-terminus: Metalloprotease MmpA (398 aa).

His22 lines the Zn(2+) pocket. Glu23 is a catalytic residue. His26 is a binding site for Zn(2+). The next 3 helical transmembrane spans lie at 117–139 (FIAV…VILV), 316–338 (QFWL…IPVL), and 362–381 (AAGF…FAAW). Residues 130–203 (AILVFAVILV…MPIDFAVERD (74 aa)) enclose the PDZ domain.

The protein belongs to the peptidase M50B family. Zn(2+) serves as cofactor.

The protein resides in the cell inner membrane. Functionally, involved in the regulated intramembrane proteolysis (RIP) of the short isoform of PodJ protein (PodJS), during the swarmer-to-stalked transition. The cleavage occurs near or within the single transmembrane of PodJS thereby releasing the N-terminal segment into the cytoplasm for subsequent degradation. It contributes to preserve asymmetry in the next cell cycle through sequential degradation. The polypeptide is Metalloprotease MmpA (mmpA) (Caulobacter vibrioides (strain ATCC 19089 / CIP 103742 / CB 15) (Caulobacter crescentus)).